The primary structure comprises 446 residues: Maltoporin (446 aa).

Residues 1–25 form the signal peptide; the sequence is MMITLRKLPLAVAVAAGVMSAQAMA.

Belongs to the porin LamB (TC 1.B.3) family. In terms of assembly, homotrimer formed of three 18-stranded antiparallel beta-barrels, containing three independent channels.

It is found in the cell outer membrane. It catalyses the reaction beta-maltose(in) = beta-maltose(out). Functionally, involved in the transport of maltose and maltodextrins. This is Maltoporin from Escherichia coli O8 (strain IAI1).